Here is a 239-residue protein sequence, read N- to C-terminus: Phosphoribosylaminoimidazole-succinocarboxamide synthase (239 aa).

Belongs to the SAICAR synthetase family.

The catalysed reaction is 5-amino-1-(5-phospho-D-ribosyl)imidazole-4-carboxylate + L-aspartate + ATP = (2S)-2-[5-amino-1-(5-phospho-beta-D-ribosyl)imidazole-4-carboxamido]succinate + ADP + phosphate + 2 H(+). It participates in purine metabolism; IMP biosynthesis via de novo pathway; 5-amino-1-(5-phospho-D-ribosyl)imidazole-4-carboxamide from 5-amino-1-(5-phospho-D-ribosyl)imidazole-4-carboxylate: step 1/2. This chain is Phosphoribosylaminoimidazole-succinocarboxamide synthase, found in Shouchella clausii (strain KSM-K16) (Alkalihalobacillus clausii).